Consider the following 615-residue polypeptide: Pentatricopeptide repeat-containing protein At2g25580 (615 aa).

Residues 40–98 (FGNSNDSSEMNPREGYNGRIQNRTGSSGEVSESIHTQSQSLGSNQGRNEQSWKQSPSLS) form a disordered region. A compositionally biased stretch (polar residues) spans 58-98 (RIQNRTGSSGEVSESIHTQSQSLGSNQGRNEQSWKQSPSLS). PPR repeat units follow at residues 288–318 (DLSS…MSEK), 319–353 (NLET…GNIP), 354–389 (DGQL…GIAP), and 390–420 (SIED…MPME). Positions 490–520 (SSMQEFRAGDTNLPENDELFQLLRNLKMHMV) are type E(+) motif. The tract at residues 521–615 (EVGYVAETRM…NGACTCKDYW (95 aa)) is type DYW motif.

The protein belongs to the PPR family. PCMP-H subfamily.

The sequence is that of Pentatricopeptide repeat-containing protein At2g25580 (PCMP-H75) from Arabidopsis thaliana (Mouse-ear cress).